The chain runs to 455 residues: Transmembrane protease serine 5 (455 aa).

Topologically, residues 1-49 (MSPTLDDQSPMEIRCTEEGAGPGIFRMELGDQRQSISQSQRWCCLQRGC) are cytoplasmic. The chain crosses the membrane as a helical; Signal-anchor for type II membrane protein span at residues 50 to 70 (VILGVLGLLAGAGIASWLLVL). Over 71 to 455 (YLWPAASPSI…DWIHDTVQVR (385 aa)) the chain is Extracellular. Positions 112-207 (FRINGEDLLL…SGRIVSLKCS (96 aa)) constitute an SRCR domain. 7 disulfide bridges follow: C135–C196, C148–C206, C209–C328, C243–C259, C342–C411, C374–C390, and C401–C429. N163 and N170 each carry an N-linked (GlcNAc...) asparagine glycan. The region spanning 218 to 453 (IVGGQAVASG…FLDWIHDTVQ (236 aa)) is the Peptidase S1 domain. Residues H258 and D308 each act as charge relay system in the active site. 2 N-linked (GlcNAc...) asparagine glycosylation sites follow: N319 and N375. The active-site Charge relay system is the S405.

Belongs to the peptidase S1 family.

It is found in the cell membrane. Its function is as follows. May play a role in hearing. The polypeptide is Transmembrane protease serine 5 (Tmprss5) (Mus musculus (Mouse)).